The primary structure comprises 185 residues: Adenine phosphoribosyltransferase (185 aa).

It belongs to the purine/pyrimidine phosphoribosyltransferase family.

Its subcellular location is the cytoplasm. The enzyme catalyses AMP + diphosphate = 5-phospho-alpha-D-ribose 1-diphosphate + adenine. It participates in purine metabolism; AMP biosynthesis via salvage pathway; AMP from adenine: step 1/1. Functionally, catalyzes a salvage reaction resulting in the formation of AMP, that is energically less costly than de novo synthesis. The sequence is that of Adenine phosphoribosyltransferase (aprt-1) from Caenorhabditis elegans.